An 886-amino-acid chain; its full sequence is 3',5'-cyclic-AMP phosphodiesterase 4A (886 aa).

The interval 1 to 128 (MEPPTVPSER…GRSPLDSQAS (128 aa)) is disordered. Ser-13 bears the Phosphoserine mark. The span at 36–46 (QPRTPIRIQQR) shows a compositional bias: low complexity. Residues 51-78 (SAERAERERQPHRPIERADAMDTSDRPG) are compositionally biased toward basic and acidic residues. The span at 93-104 (TGTGSGGAGGGS) shows a compositional bias: gly residues. 2 positions are modified to phosphoserine: Gly-119 and Leu-123. Phosphoserine; by MAPKAPK2 is present on Ser-152. A phosphoserine mark is found at Ser-157, Ser-165, and Ser-209. The segment at 294–331 (KQNEVEIPSPTMKEREKQQAPRPRPSQPPPPPVPHLQP) is disordered. The span at 315 to 328 (RPRPSQPPPPPVPH) shows a compositional bias: pro residues. Residue Ser-346 is modified to Phosphoserine. Residues 357–686 (VKTDQEELLA…DWYYSAIRQS (330 aa)) enclose the PDEase domain. A Glycyl lysine isopeptide (Lys-Gly) (interchain with G-Cter in SUMO) cross-link involves residue Lys-358. Residue His-433 is the Proton donor of the active site. His-433 lines the 3',5'-cyclic AMP pocket. Positions 433 and 437 each coordinate AMP. 4 residues coordinate Zn(2+): His-437, His-473, Asp-474, and Asp-591. Residues Asp-474, Asp-591, Gln-642, and Phe-645 each contribute to the AMP site. A Mg(2+)-binding site is contributed by Asp-474. Asp-474 contributes to the Mn(2+) binding site. Gln-642 and Phe-645 together coordinate 3',5'-cyclic AMP. Disordered regions lie at residues 682–705 (AIRQSPSPPPEEESRGPGHPPLPD) and 866–886 (FGEDTSALPAPGGGGSGGDPT). Residues Ser-686 and Ser-688 each carry the phosphoserine modification. Gly residues predominate over residues 876–886 (PGGGGSGGDPT).

Belongs to the cyclic nucleotide phosphodiesterase family. PDE4 subfamily. In terms of assembly, interacts with LYN (via SH3 domain). Interacts with ARRB2. Zn(2+) is required as a cofactor. It depends on Mg(2+) as a cofactor. Requires Mn(2+) as cofactor. In terms of processing, proteolytically cleaved by CASP3. Post-translationally, phosphorylated at Ser-119 by PKA. Expressed in lymphoid cell subsets including CD8-positive T cells and T-helper 2 cells. Expressed in dendritic cells. In terms of tissue distribution, highly expressed in liver, stomach, testis, thyroid and adrenal glands and at a lower extent in placenta, kidney, pancreas, ovary, uterus and skin. Expressed in myeloid cell subsets including dendritic cells, monocytes, macrophages, eosinophils and mast cells. Expressed in natural killer cells. Expressed in bronchial smooth muscle. As to expression, expressed at high levels in the heart and small intestine. It is also found in the brain, kidney, spleen, colon, salivary gland, ovary and peripheral blood lymphocytes. Expressed predominantly in skeletal muscle and brain and at lower levels in the testis. Found in specific neuronal subpopulations including cortical pyramidal neurons, horn neurons in the spinal cord and Purkinje cells in cerebellum (at protein level).

It localises to the cytoplasm. Its subcellular location is the perinuclear region. The protein resides in the cell projection. The protein localises to the ruffle membrane. It is found in the cytosol. It localises to the membrane. The catalysed reaction is 3',5'-cyclic AMP + H2O = AMP + H(+). Its pathway is purine metabolism; 3',5'-cyclic AMP degradation; AMP from 3',5'-cyclic AMP: step 1/1. With respect to regulation, inhibited by rolipram, cilomilast, Ro 20-1724, roflumilast and denbufylline. Inhibited by rolipram. Its activity is regulated as follows. Inhibited by rolipram and cilomilast. Functionally, hydrolyzes the second messenger 3',5'-cyclic AMP (cAMP), which is a key regulator of many important physiological processes. Efficiently hydrolyzes cAMP. Its function is as follows. Efficiently hydrolyzes cAMP. The phosphodiesterase activity is not affected by calcium, calmodulin or cyclic GMP (cGMP) levels. Does not hydrolyze cGMP. The chain is 3',5'-cyclic-AMP phosphodiesterase 4A (PDE4A) from Homo sapiens (Human).